The chain runs to 209 residues: Uracil phosphoribosyltransferase (209 aa).

5-phospho-alpha-D-ribose 1-diphosphate-binding positions include R78, R103, and 130 to 138 (DPMLATAGS). Residues I193 and 198–200 (GDA) each bind uracil. A 5-phospho-alpha-D-ribose 1-diphosphate-binding site is contributed by D199.

Belongs to the UPRTase family. Mg(2+) serves as cofactor.

The catalysed reaction is UMP + diphosphate = 5-phospho-alpha-D-ribose 1-diphosphate + uracil. It functions in the pathway pyrimidine metabolism; UMP biosynthesis via salvage pathway; UMP from uracil: step 1/1. Its activity is regulated as follows. Allosterically activated by GTP. Functionally, catalyzes the conversion of uracil and 5-phospho-alpha-D-ribose 1-diphosphate (PRPP) to UMP and diphosphate. The protein is Uracil phosphoribosyltransferase of Methylibium petroleiphilum (strain ATCC BAA-1232 / LMG 22953 / PM1).